The sequence spans 1622 residues: Ferredoxin-dependent glutamate synthase 1, chloroplastic/mitochondrial (1622 aa).

The transit peptide at 1–105 (MAMQSLSPVP…LEDILSERGA (105 aa)) directs the protein to the chloroplast and mitochondrion. Cysteine 106 (for GATase activity) is an active-site residue. The Glutamine amidotransferase type-2 domain occupies 106 to 505 (CGVGFIANLD…PGMMIAVDLV (400 aa)). 1184-1241 (LTETHQTLIANGLRERVILRVDGGLKSGVDVLMAAAMGADEYGFGSLAMIATGCVMAR) is a binding site for FMN. Residues cysteine 1237, cysteine 1243, and cysteine 1248 each coordinate [3Fe-4S] cluster.

It belongs to the glutamate synthase family. Interacts with SHM1. Requires [3Fe-4S] cluster as cofactor. FAD serves as cofactor. FMN is required as a cofactor. In terms of tissue distribution, highly expressed in leaves. High expression in the leaf mesophyll and phloem companion cell-sieve element complex.

It localises to the plastid. The protein resides in the chloroplast stroma. It is found in the mitochondrion matrix. It carries out the reaction 2 oxidized [2Fe-2S]-[ferredoxin] + 2 L-glutamate = L-glutamine + 2 reduced [2Fe-2S]-[ferredoxin] + 2-oxoglutarate + 2 H(+). The protein operates within amino-acid biosynthesis; L-glutamate biosynthesis via GLT pathway; L-glutamate from 2-oxoglutarate and L-glutamine (ferredoxin route): step 1/1. It functions in the pathway energy metabolism; nitrogen metabolism. Functionally, involved in glutamate biosynthesis in leaf. Required for the reassimilation of ammonium ions generated during photorespiration. The sequence is that of Ferredoxin-dependent glutamate synthase 1, chloroplastic/mitochondrial from Arabidopsis thaliana (Mouse-ear cress).